A 432-amino-acid chain; its full sequence is Adenylosuccinate synthetase (432 aa).

Residues 13–19 (GDEGKGK) and 41–43 (GHT) contribute to the GTP site. Asp-14 (proton acceptor) is an active-site residue. Mg(2+) contacts are provided by Asp-14 and Gly-41. Residues 14–17 (DEGK), 39–42 (NAGH), Thr-130, Arg-144, Gln-225, Thr-240, and Arg-304 each bind IMP. The active-site Proton donor is His-42. 300–306 (ATTGRRR) provides a ligand contact to substrate. GTP-binding positions include Arg-306, 332–334 (KLD), and 415–417 (STG).

The protein belongs to the adenylosuccinate synthetase family. In terms of assembly, homodimer. It depends on Mg(2+) as a cofactor.

It is found in the cytoplasm. It catalyses the reaction IMP + L-aspartate + GTP = N(6)-(1,2-dicarboxyethyl)-AMP + GDP + phosphate + 2 H(+). It functions in the pathway purine metabolism; AMP biosynthesis via de novo pathway; AMP from IMP: step 1/2. In terms of biological role, plays an important role in the de novo pathway of purine nucleotide biosynthesis. Catalyzes the first committed step in the biosynthesis of AMP from IMP. This is Adenylosuccinate synthetase from Shigella sonnei (strain Ss046).